The chain runs to 235 residues: Triosephosphate isomerase (235 aa).

Substrate is bound at residue 7-9 (NFK). The Electrophile role is filled by His92. The Proton acceptor role is filled by Glu161. Substrate contacts are provided by Gly167 and Ser197.

The protein belongs to the triosephosphate isomerase family. In terms of assembly, homodimer.

The protein localises to the cytoplasm. The enzyme catalyses D-glyceraldehyde 3-phosphate = dihydroxyacetone phosphate. The protein operates within carbohydrate biosynthesis; gluconeogenesis. Its pathway is carbohydrate degradation; glycolysis; D-glyceraldehyde 3-phosphate from glycerone phosphate: step 1/1. In terms of biological role, involved in the gluconeogenesis. Catalyzes stereospecifically the conversion of dihydroxyacetone phosphate (DHAP) to D-glyceraldehyde-3-phosphate (G3P). This is Triosephosphate isomerase from Helicobacter hepaticus (strain ATCC 51449 / 3B1).